Consider the following 542-residue polypeptide: Chaperonin GroEL (542 aa).

Residues 29–32, K50, 86–90, G414, 477–479, and D493 contribute to the ATP site; these read TMGP, DGTTT, and NAA.

It belongs to the chaperonin (HSP60) family. As to quaternary structure, forms a cylinder of 14 subunits composed of two heptameric rings stacked back-to-back. Interacts with the co-chaperonin GroES.

Its subcellular location is the cytoplasm. It catalyses the reaction ATP + H2O + a folded polypeptide = ADP + phosphate + an unfolded polypeptide.. In terms of biological role, together with its co-chaperonin GroES, plays an essential role in assisting protein folding. The GroEL-GroES system forms a nano-cage that allows encapsulation of the non-native substrate proteins and provides a physical environment optimized to promote and accelerate protein folding. The polypeptide is Chaperonin GroEL (Sulfurovum sp. (strain NBC37-1)).